A 1297-amino-acid chain; its full sequence is DNA-directed RNA polymerase subunit beta'' (1297 aa).

Zn(2+)-binding residues include Cys-220, Cys-293, Cys-300, and Cys-303. The span at Arg-1278–Lys-1288 shows a compositional bias: basic residues. The disordered stretch occupies residues Arg-1278–Lys-1297.

The protein belongs to the RNA polymerase beta' chain family. RpoC2 subfamily. In terms of assembly, in plastids the minimal PEP RNA polymerase catalytic core is composed of four subunits: alpha, beta, beta', and beta''. When a (nuclear-encoded) sigma factor is associated with the core the holoenzyme is formed, which can initiate transcription. The cofactor is Zn(2+).

The protein resides in the plastid. The protein localises to the chloroplast. The catalysed reaction is RNA(n) + a ribonucleoside 5'-triphosphate = RNA(n+1) + diphosphate. In terms of biological role, DNA-dependent RNA polymerase catalyzes the transcription of DNA into RNA using the four ribonucleoside triphosphates as substrates. The chain is DNA-directed RNA polymerase subunit beta'' from Welwitschia mirabilis (Tree tumbo).